A 101-amino-acid polypeptide reads, in one-letter code: NAD(P)H-quinone oxidoreductase subunit 4L, chloroplastic (101 aa).

3 helical membrane-spanning segments follow: residues 2–22 (LLEHVLVLSAYLFSIGIYGLI), 32–52 (MCLELILNAVNMNFVTFSDFF), and 61–81 (IFSIFVIAIAAAEAAIGSAIV).

The protein belongs to the complex I subunit 4L family. NDH is composed of at least 16 different subunits, 5 of which are encoded in the nucleus.

It is found in the plastid. It localises to the chloroplast thylakoid membrane. It carries out the reaction a plastoquinone + NADH + (n+1) H(+)(in) = a plastoquinol + NAD(+) + n H(+)(out). The catalysed reaction is a plastoquinone + NADPH + (n+1) H(+)(in) = a plastoquinol + NADP(+) + n H(+)(out). Its function is as follows. NDH shuttles electrons from NAD(P)H:plastoquinone, via FMN and iron-sulfur (Fe-S) centers, to quinones in the photosynthetic chain and possibly in a chloroplast respiratory chain. The immediate electron acceptor for the enzyme in this species is believed to be plastoquinone. Couples the redox reaction to proton translocation, and thus conserves the redox energy in a proton gradient. This chain is NAD(P)H-quinone oxidoreductase subunit 4L, chloroplastic, found in Carica papaya (Papaya).